Reading from the N-terminus, the 274-residue chain is uncharacterized protein (274 aa).

This is an uncharacterized protein from Treponema pallidum (strain Nichols).